The sequence spans 860 residues: Leucine--tRNA ligase (860 aa).

Positions 42-52 (PYPSGRLHMGH) match the 'HIGH' region motif. Residues 619-623 (KMSKS) carry the 'KMSKS' region motif. Lysine 622 is an ATP binding site.

The protein belongs to the class-I aminoacyl-tRNA synthetase family.

Its subcellular location is the cytoplasm. It carries out the reaction tRNA(Leu) + L-leucine + ATP = L-leucyl-tRNA(Leu) + AMP + diphosphate. The polypeptide is Leucine--tRNA ligase (Yersinia pestis bv. Antiqua (strain Angola)).